A 522-amino-acid chain; its full sequence is Man(5)GlcNAc(2)-PP-dolichol translocation protein RFT1 (522 aa).

The next 10 helical transmembrane spans lie at 35–55, 75–95, 108–128, 143–165, 177–197, 322–342, 354–374, 400–420, 457–477, and 479–499; these read DVLGLVNVRLTLLYSSILFLT, LLWLSPIISTVISVVCVYLWY, VLLSFPISAIIESIAEPFSVI, FAIGQGMLICVKRIFVLAGLFMF, AQYIGAIAYLLFNFVAFYIYI, VVGVIGFVACTFGIPYSPVVI, GGALLLSLYSGYILVTAINGI, IIHLIINYVLCVYMNSAGFIV, TSIFLGVSLLATSFTYLLFAT, and PGLSYTLAHIAIGAVCLILTA.

Belongs to the RFT1 family.

It is found in the endoplasmic reticulum membrane. It participates in protein modification; protein glycosylation. Its function is as follows. Intramembrane glycolipid transporter that operates in the biosynthetic pathway of dolichol-linked oligosaccharides, the glycan precursors employed in protein asparagine (N)-glycosylation. The sequential addition of sugars to dolichol pyrophosphate produces dolichol-linked oligosaccharides containing fourteen sugars, including two GlcNAcs, nine mannoses and three glucoses. Once assembled, the oligosaccharide is transferred from the lipid to nascent proteins by oligosaccharyltransferases. The assembly of dolichol-linked oligosaccharides begins on the cytosolic side of the endoplasmic reticulum membrane and finishes in its lumen. RFT1 could mediate the translocation of the cytosolically oriented intermediate DolPP-GlcNAc2Man5, produced by ALG11, into the ER lumen where dolichol-linked oligosaccharides assembly continues. However, the intramembrane lipid transporter activity could not be confirmed in vitro. The sequence is that of Man(5)GlcNAc(2)-PP-dolichol translocation protein RFT1 from Caenorhabditis elegans.